A 209-amino-acid polypeptide reads, in one-letter code: rRNA N(6)-adenosine-methyltransferase METTL5 (209 aa).

Residues Gln28, Thr31, Gly59, Cys62, Val64, Asp81, and 108–109 contribute to the S-adenosyl-L-methionine site; that span reads DV.

This sequence belongs to the methyltransferase superfamily. PrmA family. In terms of assembly, heterodimer; heterodimerizes with TRMT112. In terms of tissue distribution, expressed from very early development (8 post-conceptual weeks) and expression persists through adulthood in multiple substructures of the brain, including the cerebellar cortex, hippocampus, and striatum.

The protein localises to the nucleus. It localises to the presynapse. Its subcellular location is the postsynapse. It catalyses the reaction adenosine(1832) in 18S rRNA + S-adenosyl-L-methionine = N(6)-methyladenosine(1832) in 18S rRNA + S-adenosyl-L-homocysteine + H(+). Its activity is regulated as follows. rRNA N6-adenosine-methyltransferase activity is inhibited by zinc. Functionally, catalytic subunit of a heterodimer with TRMT112, which specifically methylates the 6th position of adenine in position 1832 of 18S rRNA. N6-methylation of adenine(1832) in 18S rRNA resides in the decoding center of 18S rRNA and is required for translation and embryonic stem cells (ESCs) pluripotency and differentiation. The sequence is that of rRNA N(6)-adenosine-methyltransferase METTL5 from Homo sapiens (Human).